The primary structure comprises 469 residues: Neuraminidase (469 aa).

Residues 1–9 (MNPNQKIIT) are Intravirion-facing. Residues 10 to 30 (IGSVSLTIATVCFLMQIAILV) form a helical membrane-spanning segment. Residues 11-33 (GSVSLTIATVCFLMQIAILVTTV) form an involved in apical transport and lipid raft association region. At 31 to 469 (TTVTLHFRQY…DGADINLMPI (439 aa)) the chain is on the virion surface side. Residues 36–88 (HFRQYECDSPANNQVMPCEPTIIERNITEIVYLNNTTIEKEICPKLVEYRNWS) are hypervariable stalk region. Residues Asn-61, Asn-69, Asn-70, and Asn-86 are each glycosylated (N-linked (GlcNAc...) asparagine; by host). Residues 91 to 469 (QCKITGFAPF…DGADINLMPI (379 aa)) form a head of neuraminidase region. Cystine bridges form between Cys-92-Cys-417, Cys-124-Cys-129, Cys-183-Cys-230, Cys-232-Cys-237, Cys-278-Cys-291, Cys-280-Cys-289, Cys-318-Cys-337, and Cys-421-Cys-447. Arg-118 lines the substrate pocket. An N-linked (GlcNAc...) asparagine; by host glycan is attached at Asn-146. Residue Asp-151 is the Proton donor/acceptor of the active site. Arg-152 contributes to the substrate binding site. N-linked (GlcNAc...) asparagine; by host glycosylation is found at Asn-200 and Asn-234. Residue 276 to 277 (EE) coordinates substrate. Residue Arg-292 coordinates substrate. Ca(2+) contacts are provided by Asp-293, Gly-297, and Asp-324. The interval 323-350 (GDTPRNNDRSSNSNCRNPNNERGNHGVK) is disordered. Residues 331–343 (RSSNSNCRNPNNE) are compositionally biased toward low complexity. Arg-371 contributes to the substrate binding site. Asn-402 carries an N-linked (GlcNAc...) asparagine; by host glycan. Tyr-406 serves as the catalytic Nucleophile.

Belongs to the glycosyl hydrolase 34 family. Homotetramer. Requires Ca(2+) as cofactor. Post-translationally, N-glycosylated.

It localises to the virion membrane. The protein resides in the host apical cell membrane. It carries out the reaction Hydrolysis of alpha-(2-&gt;3)-, alpha-(2-&gt;6)-, alpha-(2-&gt;8)- glycosidic linkages of terminal sialic acid residues in oligosaccharides, glycoproteins, glycolipids, colominic acid and synthetic substrates.. Inhibited by the neuraminidase inhibitors zanamivir (Relenza) and oseltamivir (Tamiflu). These drugs interfere with the release of progeny virus from infected cells and are effective against all influenza strains. Resistance to neuraminidase inhibitors is quite rare. Catalyzes the removal of terminal sialic acid residues from viral and cellular glycoconjugates. Cleaves off the terminal sialic acids on the glycosylated HA during virus budding to facilitate virus release. Additionally helps virus spread through the circulation by further removing sialic acids from the cell surface. These cleavages prevent self-aggregation and ensure the efficient spread of the progeny virus from cell to cell. Otherwise, infection would be limited to one round of replication. Described as a receptor-destroying enzyme because it cleaves a terminal sialic acid from the cellular receptors. May facilitate viral invasion of the upper airways by cleaving the sialic acid moieties on the mucin of the airway epithelial cells. Likely to plays a role in the budding process through its association with lipid rafts during intracellular transport. May additionally display a raft-association independent effect on budding. Plays a role in the determination of host range restriction on replication and virulence. Sialidase activity in late endosome/lysosome traffic seems to enhance virus replication. This Aves (Human) protein is Neuraminidase.